Here is an 82-residue protein sequence, read N- to C-terminus: uncharacterized protein (82 aa).

3 helical membrane passes run Ile-4–Phe-26, Phe-31–Ala-50, and Ser-55–Leu-77.

Its subcellular location is the cell membrane. This is an uncharacterized protein from Bacillus subtilis (strain 168).